Here is a 342-residue protein sequence, read N- to C-terminus: CMP-N-acetylneuraminate-beta-galactosamide-alpha-2,3-sialyltransferase 1 (342 aa).

Residues 1 to 10 lie on the Cytoplasmic side of the membrane; sequence MVTVRKRNVK. The helical; Signal-anchor for type II membrane protein transmembrane segment at 11 to 28 threads the bilayer; the sequence is VFTFAFVLITVTSFLLNY. The Lumenal segment spans residues 29-342; the sequence is KHQVTMTTWD…IEKIKFFKGR (314 aa). Cystine bridges form between Cys-61–Cys-66, Cys-63–Cys-141, and Cys-144–Cys-283. N-linked (GlcNAc...) asparagine glycosylation occurs at Asn-81. Gln-107 is a substrate binding site. N-linked (GlcNAc...) asparagine glycosylation occurs at Asn-116. Substrate contacts are provided by Asn-149 and Asn-172. 2 N-linked (GlcNAc...) asparagine glycosylation sites follow: Asn-203 and Asn-229. Residues Tyr-232, Tyr-268, Gly-272, Gly-292, and His-301 each contribute to the substrate site. Asn-306 carries N-linked (GlcNAc...) asparagine glycosylation. A substrate-binding site is contributed by His-318. Asn-325 carries N-linked (GlcNAc...) asparagine glycosylation.

The protein belongs to the glycosyltransferase 29 family. The soluble form derives from the membrane form by proteolytic processing.

Its subcellular location is the golgi apparatus. The protein resides in the golgi stack membrane. It is found in the secreted. It carries out the reaction a beta-D-galactosyl-(1-&gt;3)-N-acetyl-alpha-D-galactosaminyl derivative + CMP-N-acetyl-beta-neuraminate = an N-acetyl-alpha-neuraminyl-(2-&gt;3)-beta-D-galactosyl-(1-&gt;3)-N-acetyl-alpha-D-galactosaminyl derivative + CMP + H(+). It functions in the pathway protein modification; protein glycosylation. Its function is as follows. Responsible for the synthesis of the sequence NeuAc-alpha-2,3-Gal-beta-1,3-GalNAc- found on sugar chains O-linked to Thr or Ser and also as a terminal sequence on certain gangliosides. SIAT4A and SIAT4B sialylate the same acceptor substrates but exhibit different Km values. The polypeptide is CMP-N-acetylneuraminate-beta-galactosamide-alpha-2,3-sialyltransferase 1 (ST3GAL1) (Gallus gallus (Chicken)).